Consider the following 347-residue polypeptide: Gas vesicle ATPase GvpN1 (347 aa).

Positions 1 to 11 (MTNESRKRKVR) are enriched in basic residues. Residues 1–64 (MTNESRKRKV…EGFVPEEQSF (64 aa)) are disordered. Basic and acidic residues predominate over residues 18 to 55 (SRGDKKQGRSQSRDDKEIERLERQNDARGQESSTHVDE). 91–98 (GPTGCGKT) lines the ATP pocket.

This sequence belongs to the CbbQ/NirQ/NorQ/GpvN family. As to quaternary structure, forms homodimers, forms a GvpN1-GvpO1 heterodimer, interacts with GvpC1 (via the latter's C-terminus) and GvpL, might interact with GvpA1.

Its subcellular location is the gas vesicle. The protein localises to the cytoplasm. The catalysed reaction is ATP + H2O = ADP + phosphate + H(+). In terms of biological role, an ATPase that functions in gas vesicle formation. A minor component of the gas vesicle, also found in soluble extracts. Probably enhances gas vesicle formation. Gas vesicles are hollow, gas filled proteinaceous nanostructures found in several microbial planktonic microorganisms. They allow positioning of halobacteria at the optimal depth for growth in the poorly aerated, shallow brine pools of their habitat. Functionally, expression of a 9.5 kb p-vac DNA fragment containing 2 divergently transcribed regions (gvpD-gvpE-gvpF-gvpG-gvpH-gvpI-gvpJ-gvpK-gvpL-gvpM and gvpA-gvpC-gvpN-gvpO) allows H.volcanii to produce gas vesicles. A similar region restores gas vesicle production in H.halobium without the p-vac locus, but which still have the c-vac locus. This is Gas vesicle ATPase GvpN1 (gvpN11) from Halobacterium salinarum (strain ATCC 700922 / JCM 11081 / NRC-1) (Halobacterium halobium).